The chain runs to 709 residues: Transcriptional factor SWI5 (709 aa).

Position 225 is a phosphoserine (serine 225). Positions 245–264 (LSPMISPPMSNTSFTGSPSR) are enriched in polar residues. The segment at 245–267 (LSPMISPPMSNTSFTGSPSRRNN) is disordered. 2 positions are modified to phosphoserine: serine 278 and serine 300. Position 339 is a phosphothreonine (threonine 339). The residue at position 376 (serine 376) is a Phosphoserine. A disordered region spans residues 443–483 (LKPPSQQARHREGVFNDLDPNVLTKNTDNEGDDNEENEPES). Residues 471–480 (NEGDDNEENE) are compositionally biased toward acidic residues. A phosphoserine mark is found at serine 488, serine 492, and serine 505. Serine 522 is modified (phosphoserine; by CDC28). C2H2-type zinc fingers lie at residues 550–574 (FECLFPGCTKTFKRRYNIRSHIQTH), 580–604 (YSCDHPGCDKAFVRNHDLIRHKKSH), and 609–632 (YACPCGKKFNREDALVVHRSRMIC). The Nuclear localization signal signature appears at 635 to 659 (GKKYENVVIKRSPRKRGRPRKDGTS). The disordered stretch occupies residues 644-677 (KRSPRKRGRPRKDGTSSVSSSPIKENINKDHNGQ). The residue at position 646 (serine 646) is a Phosphoserine; by CDC28. Residues 647–659 (PRKRGRPRKDGTS) constitute a DNA-binding region (a.T hook). Position 664 is a phosphoserine; by CDC28 (serine 664).

In terms of processing, cell cycle-dependent phosphorylation of three serine residues prevents SWI5 from entering the nucleus, and it accumulates in the cytoplasm. As a consequence of CDC28 kinase inactivation at the end of anaphase, the three serine residues are dephosphorylated and SWI5 enters the nucleus to activate transcription. It is then rapidly degraded. Threonine phosphorylation also seems to occur. Post-translationally, phosphorylated by PHO85.

It localises to the nucleus. The protein localises to the cytoplasm. Its function is as follows. Determines the mother-cell-specific transcription of the HO endonuclease gene that is responsible for the initiation of mating-type switching in yeast. Recognizes a specific sequence in the promoter of the HO gene. Activates EGT2 transcription in a concentration-dependent manner. Synthesized during G2 and early mitosis. The protein is Transcriptional factor SWI5 (SWI5) of Saccharomyces cerevisiae (strain ATCC 204508 / S288c) (Baker's yeast).